We begin with the raw amino-acid sequence, 380 residues long: Glycine betaine/carnitine/choline transport ATP-binding protein OpuCA (380 aa).

The ABC transporter domain maps to 2 to 236; the sequence is LKLEQVSKVY…PANEFVEEFI (235 aa). Residue 35-42 coordinates ATP; it reads GPSGCGKT. CBS domains are found at residues 255–314 and 315–373; these read MNRT…VGDV and YRSD…WGDE.

Belongs to the ABC transporter superfamily. As to quaternary structure, the complex is composed of two ATP-binding proteins (OpuCA), two transmembrane proteins (OpuCB and OpuCD) and a solute-binding protein (OpuCC).

With respect to regulation, binds cyclic di-AMP (c-di-AMP), which may regulate the transporter activity. Its function is as follows. Involved in a high affinity multicomponent binding-protein-dependent transport system for glycine betaine, carnitine and choline; probably responsible for energy coupling to the transport system. The polypeptide is Glycine betaine/carnitine/choline transport ATP-binding protein OpuCA (opuCA) (Bacillus subtilis (strain 168)).